The sequence spans 417 residues: Serine hydroxymethyltransferase (417 aa).

(6S)-5,6,7,8-tetrahydrofolate-binding positions include Leu-112 and 116–118 (GHL). N6-(pyridoxal phosphate)lysine is present on Lys-221. Residue Glu-247 coordinates (6S)-5,6,7,8-tetrahydrofolate.

It belongs to the SHMT family. Homodimer. It depends on pyridoxal 5'-phosphate as a cofactor.

The protein resides in the cytoplasm. It catalyses the reaction (6R)-5,10-methylene-5,6,7,8-tetrahydrofolate + glycine + H2O = (6S)-5,6,7,8-tetrahydrofolate + L-serine. It functions in the pathway one-carbon metabolism; tetrahydrofolate interconversion. Its pathway is amino-acid biosynthesis; glycine biosynthesis; glycine from L-serine: step 1/1. Its function is as follows. Catalyzes the reversible interconversion of serine and glycine with tetrahydrofolate (THF) serving as the one-carbon carrier. This reaction serves as the major source of one-carbon groups required for the biosynthesis of purines, thymidylate, methionine, and other important biomolecules. Also exhibits THF-independent aldolase activity toward beta-hydroxyamino acids, producing glycine and aldehydes, via a retro-aldol mechanism. The chain is Serine hydroxymethyltransferase from Borrelia turicatae (strain 91E135).